We begin with the raw amino-acid sequence, 260 residues long: UPF0294 protein YPO1077/y3099/YP_2772 (260 aa).

This sequence belongs to the UPF0294 family.

It localises to the cytoplasm. This Yersinia pestis protein is UPF0294 protein YPO1077/y3099/YP_2772.